Consider the following 106-residue polypeptide: UPF0060 membrane protein Mrad2831_0929 (106 aa).

4 consecutive transmembrane segments (helical) span residues 3 to 23 (LLAY…FWAW), 30 to 50 (AWWT…LTLV), 59 to 79 (FAAY…LAEG), and 87 to 104 (LAGS…LLGR).

This sequence belongs to the UPF0060 family.

Its subcellular location is the cell inner membrane. The protein is UPF0060 membrane protein Mrad2831_0929 of Methylobacterium radiotolerans (strain ATCC 27329 / DSM 1819 / JCM 2831 / NBRC 15690 / NCIMB 10815 / 0-1).